The primary structure comprises 354 residues: Zinc finger protein 346 (354 aa).

4 Matrin-type zinc fingers span residues 34-64, 95-125, 165-195, and 232-262; these read TQCK…KVRR, KCCP…NLRL, KFCK…QETK, and FSCD…QLMS. Residues cysteine 36, cysteine 39, histidine 52, histidine 58, cysteine 97, cysteine 100, histidine 113, and histidine 119 each coordinate Zn(2+). A disordered region spans residues 263–343; it reads MTPLSKEGPP…QPYVREDMMG (81 aa). 2 stretches are compositionally biased toward low complexity: residues 270 to 289 and 310 to 323; these read GPPA…TGGA and GPSS…MGGL. Residues 324 to 333 show a composition bias toward pro residues; the sequence is MPPPYPPPHS.

The protein localises to the nucleus. It localises to the cytoplasm. In terms of biological role, binds preferentially to dsRNA, but also to RNA-DNA hybrids. The sequence is that of Zinc finger protein 346 from Xenopus tropicalis (Western clawed frog).